The sequence spans 258 residues: uncharacterized protein (258 aa).

The next 7 helical transmembrane spans lie at 8–28 (VFLA…IVWF), 38–58 (VFFI…GGVH), 70–90 (EAMQ…GIFE), 121–141 (LEAI…AFAI), 176–196 (LGGI…LLVL), 204–224 (PLFL…AVLY), and 231–251 (HAAA…YWIV).

The protein localises to the cell membrane. This is an uncharacterized protein from Bacillus subtilis (strain 168).